The sequence spans 340 residues: 4-amino-5-hydroxymethyl-2-methylpyrimidine phosphate synthase THI5 (340 aa).

K62 carries the post-translational modification N6-(pyridoxal phosphate)lysine. H66 is a catalytic residue. A pyridoxal 5'-phosphate-binding site is contributed by 115–118 (GEFG). Residues 195-199 (CCCFC) carry the CCCFC; essential for catalytic activity, may be the site of iron coordination motif.

Belongs to the NMT1/THI5 family. Homodimer. Fe cation is required as a cofactor.

It carries out the reaction N(6)-(pyridoxal phosphate)-L-lysyl-[4-amino-5-hydroxymethyl-2-methylpyrimidine phosphate synthase] + L-histidyl-[4-amino-5-hydroxymethyl-2-methylpyrimidine phosphate synthase] + 2 Fe(3+) + 4 H2O = L-lysyl-[4-amino-5-hydroxymethyl-2-methylpyrimidine phosphate synthase] + (2S)-2-amino-5-hydroxy-4-oxopentanoyl-[4-amino-5-hydroxymethyl-2-methylpyrimidine phosphate synthase] + 4-amino-2-methyl-5-(phosphooxymethyl)pyrimidine + 3-oxopropanoate + 2 Fe(2+) + 2 H(+). Its pathway is cofactor biosynthesis; thiamine diphosphate biosynthesis. In terms of biological role, responsible for the formation of the pyrimidine heterocycle in the thiamine biosynthesis pathway. Catalyzes the formation of hydroxymethylpyrimidine phosphate (HMP-P) from histidine and pyridoxal phosphate (PLP). The protein uses PLP and the active site histidine to form HMP-P, generating an inactive enzyme. The enzyme can only undergo a single turnover, which suggests it is a suicide enzyme. This chain is 4-amino-5-hydroxymethyl-2-methylpyrimidine phosphate synthase THI5, found in Saccharomyces cerevisiae (strain ATCC 204508 / S288c) (Baker's yeast).